The following is a 520-amino-acid chain: Keratin, type II cytoskeletal 72 (520 aa).

A head region spans residues 1 to 133 (MSRQLTLYPG…DPEIQKVRAQ (133 aa)). The segment at 134–169 (EREQIKALNNKFASFIDKVRFLEQQNQVLETKWELL) is coil 1A. Positions 134–447 (EREQIKALNN…KLLESEESRM (314 aa)) constitute an IF rod domain. Residues 170 to 188 (QQLDQNNSRRSLEPVHESY) are linker 1. Residues 189-280 (ISNLQKQLEI…VLFEGEIAQM (92 aa)) are coil 1B. Positions 281-304 (QSHISDTSVILSMDNNRQLDLDSI) are linker 12. The segment at 305–443 (LAEVRAQYEE…ATYRKLLESE (139 aa)) is coil 2. Positions 444–520 (ESRMAGEYPS…SSCVSKKASR (77 aa)) are tail. The disordered stretch occupies residues 495-520 (GSCGSELKDPPAKTSASSCVSKKASR).

The protein belongs to the intermediate filament family. As to quaternary structure, heterotetramer of two type I and two type II keratins.

Has a role in hair formation. Specific component of keratin intermediate filaments in the inner root sheath (IRS) of the hair follicle. The chain is Keratin, type II cytoskeletal 72 (Krt72) from Rattus norvegicus (Rat).